The following is a 123-amino-acid chain: Histone H2B 2 (123 aa).

The interval 1–32 is disordered; it reads MAPPKPSAKGAKKAAKTVTKPKDGKKRRHARK. S110 carries O-linked (GlcNAc) serine glycosylation. Residue K118 forms a Glycyl lysine isopeptide (Lys-Gly) (interchain with G-Cter in ubiquitin) linkage.

The protein belongs to the histone H2B family. In terms of assembly, the nucleosome is a histone octamer containing two molecules each of H2A, H2B, H3 and H4 assembled in one H3-H4 heterotetramer and two H2A-H2B heterodimers. The octamer wraps approximately 147 bp of DNA. In terms of processing, monoubiquitination of Lys-118 gives a specific tag for epigenetic transcriptional activation and is also prerequisite for histone H3 'Lys-4' and 'Lys-79' methylation. Post-translationally, glcNAcylation at Ser-110 promotes monoubiquitination of Lys-118. It fluctuates in response to extracellular glucose, and associates with transcribed genes.

It localises to the nucleus. The protein localises to the chromosome. In terms of biological role, core component of nucleosome. Nucleosomes wrap and compact DNA into chromatin, limiting DNA accessibility to the cellular machineries which require DNA as a template. Histones thereby play a central role in transcription regulation, DNA repair, DNA replication and chromosomal stability. DNA accessibility is regulated via a complex set of post-translational modifications of histones, also called histone code, and nucleosome remodeling. This chain is Histone H2B 2 (his-4), found in Caenorhabditis elegans.